We begin with the raw amino-acid sequence, 549 residues long: Membrane protein insertase YidC (549 aa).

Residues leucine 9 to phenylalanine 29 form a helical membrane-spanning segment. A compositionally biased stretch (low complexity) spans threonine 37 to threonine 51. Residues threonine 37–serine 56 are disordered. 5 helical membrane-spanning segments follow: residues valine 328–leucine 348, phenylalanine 351–tyrosine 371, glycine 417–isoleucine 437, tryptophan 452–methionine 472, and leucine 498–tryptophan 518.

This sequence belongs to the OXA1/ALB3/YidC family. Type 1 subfamily. As to quaternary structure, interacts with the Sec translocase complex via SecD. Specifically interacts with transmembrane segments of nascent integral membrane proteins during membrane integration.

It localises to the cell inner membrane. Its function is as follows. Required for the insertion and/or proper folding and/or complex formation of integral membrane proteins into the membrane. Involved in integration of membrane proteins that insert both dependently and independently of the Sec translocase complex, as well as at least some lipoproteins. Aids folding of multispanning membrane proteins. This chain is Membrane protein insertase YidC, found in Helicobacter pylori (strain J99 / ATCC 700824) (Campylobacter pylori J99).